Reading from the N-terminus, the 149-residue chain is 3-dehydroquinate dehydratase (149 aa).

The active-site Proton acceptor is Tyr-26. Asn-77, His-83, and Asp-90 together coordinate substrate. The active-site Proton donor is His-103. Substrate-binding positions include 104 to 105 (LS) and Arg-114.

The protein belongs to the type-II 3-dehydroquinase family. In terms of assembly, homododecamer.

The enzyme catalyses 3-dehydroquinate = 3-dehydroshikimate + H2O. It participates in metabolic intermediate biosynthesis; chorismate biosynthesis; chorismate from D-erythrose 4-phosphate and phosphoenolpyruvate: step 3/7. Its function is as follows. Catalyzes a trans-dehydration via an enolate intermediate. This Haemophilus influenzae (strain 86-028NP) protein is 3-dehydroquinate dehydratase.